Here is a 310-residue protein sequence, read N- to C-terminus: HTH-type transcriptional regulator PunR (310 aa).

Residues 2–59 (WSEYSLEVVDAVARNGSFSAAAQELHRVPSAVSYTVRQLEEWLAVPLFERRHRDVELT) form the HTH lysR-type domain. A DNA-binding region (H-T-H motif) is located at residues 19 to 38 (FSAAAQELHRVPSAVSYTVR).

It belongs to the LysR transcriptional regulatory family.

It is found in the cytoplasm. Transcriptional regulator that activates the expression of punC, which encodes a purine nucleoside transporter. This chain is HTH-type transcriptional regulator PunR, found in Escherichia coli O157:H7.